Reading from the N-terminus, the 355-residue chain is Nuclear hormone receptor family member nhr-127 (355 aa).

The nuclear receptor DNA-binding region spans 10–86 (SIPCEVCKNQ…AGMKAEKIQK (77 aa)). 2 NR C4-type zinc fingers span residues 13–33 (CEVC…CGAC) and 49–69 (CKDG…CRYC). The NR LBD domain maps to 126 to 355 (NPHNASEGCS…IVQIVQNNFY (230 aa)).

This sequence belongs to the nuclear hormone receptor family.

The protein resides in the nucleus. Its function is as follows. Orphan nuclear receptor. May play a role in modulation of lifespan and immunity. This Caenorhabditis elegans protein is Nuclear hormone receptor family member nhr-127 (nhr-127).